A 130-amino-acid chain; its full sequence is MSQAQYAGTGRRKNAVARVRLVPGTGKITVNKKDVEEYIPHADLRLVINQPFAVTSTAGSYDVFVNVVGGGYAGQAGAIRHGIARALLQVDPDFRDSLKRAGLLTRDSRKVERKKPGLKKARKASQFSKR.

A disordered region spans residues 107 to 130 (DSRKVERKKPGLKKARKASQFSKR). The segment covering 111–130 (VERKKPGLKKARKASQFSKR) has biased composition (basic residues).

It belongs to the universal ribosomal protein uS9 family.

This Streptococcus sanguinis (strain SK36) protein is Small ribosomal subunit protein uS9.